The following is a 478-amino-acid chain: Bifunctional protein HldE (478 aa).

The interval 1 to 318 (MKVTLPDFRQ…ENAIRGRADT (318 aa)) is ribokinase. 195-198 (NLSE) provides a ligand contact to ATP. The active site involves Asp-264. The segment at 344-478 (MTNGCFDILH…NTIKANASKS (135 aa)) is cytidylyltransferase.

The protein in the N-terminal section; belongs to the carbohydrate kinase PfkB family. In the C-terminal section; belongs to the cytidylyltransferase family. Homodimer.

The enzyme catalyses D-glycero-beta-D-manno-heptose 7-phosphate + ATP = D-glycero-beta-D-manno-heptose 1,7-bisphosphate + ADP + H(+). The catalysed reaction is D-glycero-beta-D-manno-heptose 1-phosphate + ATP + H(+) = ADP-D-glycero-beta-D-manno-heptose + diphosphate. It functions in the pathway nucleotide-sugar biosynthesis; ADP-L-glycero-beta-D-manno-heptose biosynthesis; ADP-L-glycero-beta-D-manno-heptose from D-glycero-beta-D-manno-heptose 7-phosphate: step 1/4. The protein operates within nucleotide-sugar biosynthesis; ADP-L-glycero-beta-D-manno-heptose biosynthesis; ADP-L-glycero-beta-D-manno-heptose from D-glycero-beta-D-manno-heptose 7-phosphate: step 3/4. Its function is as follows. Catalyzes the phosphorylation of D-glycero-D-manno-heptose 7-phosphate at the C-1 position to selectively form D-glycero-beta-D-manno-heptose-1,7-bisphosphate. Functionally, catalyzes the ADP transfer from ATP to D-glycero-beta-D-manno-heptose 1-phosphate, yielding ADP-D-glycero-beta-D-manno-heptose. The protein is Bifunctional protein HldE of Pectobacterium carotovorum subsp. carotovorum (strain PC1).